Consider the following 492-residue polypeptide: Lysine--tRNA ligase (492 aa).

2 residues coordinate Mg(2+): E403 and E410.

This sequence belongs to the class-II aminoacyl-tRNA synthetase family. Homodimer. It depends on Mg(2+) as a cofactor.

Its subcellular location is the cytoplasm. The enzyme catalyses tRNA(Lys) + L-lysine + ATP = L-lysyl-tRNA(Lys) + AMP + diphosphate. This chain is Lysine--tRNA ligase, found in Mycoplasmoides gallisepticum (strain R(low / passage 15 / clone 2)) (Mycoplasma gallisepticum).